The following is a 344-amino-acid chain: Dihydroorotase (344 aa).

2 residues coordinate Zn(2+): His-14 and His-16. Substrate contacts are provided by residues 16 to 18 (HLR) and Asn-42. Zn(2+)-binding residues include Lys-100, His-137, and His-175. Position 100 is an N6-carboxylysine (Lys-100). His-137 contacts substrate. Leu-220 contributes to the substrate binding site. Residue Asp-248 coordinates Zn(2+). The active site involves Asp-248. Positions 252 and 264 each coordinate substrate.

Belongs to the metallo-dependent hydrolases superfamily. DHOase family. Class II DHOase subfamily. Homodimer. Zn(2+) is required as a cofactor.

It catalyses the reaction (S)-dihydroorotate + H2O = N-carbamoyl-L-aspartate + H(+). The protein operates within pyrimidine metabolism; UMP biosynthesis via de novo pathway; (S)-dihydroorotate from bicarbonate: step 3/3. Functionally, catalyzes the reversible cyclization of carbamoyl aspartate to dihydroorotate. This Cupriavidus necator (strain ATCC 17699 / DSM 428 / KCTC 22496 / NCIMB 10442 / H16 / Stanier 337) (Ralstonia eutropha) protein is Dihydroorotase.